Consider the following 282-residue polypeptide: Shikimate dehydrogenase (NADP(+)) (282 aa).

Residues 16-18 and T63 each bind shikimate; that span reads SLS. K67 acts as the Proton acceptor in catalysis. 2 residues coordinate shikimate: N88 and D103. NADP(+) is bound by residues 128–132 and L219; that span reads GAGGA. Y221 is a shikimate binding site. G243 is an NADP(+) binding site.

Belongs to the shikimate dehydrogenase family. In terms of assembly, homodimer.

It carries out the reaction shikimate + NADP(+) = 3-dehydroshikimate + NADPH + H(+). It participates in metabolic intermediate biosynthesis; chorismate biosynthesis; chorismate from D-erythrose 4-phosphate and phosphoenolpyruvate: step 4/7. Functionally, involved in the biosynthesis of the chorismate, which leads to the biosynthesis of aromatic amino acids. Catalyzes the reversible NADPH linked reduction of 3-dehydroshikimate (DHSA) to yield shikimate (SA). This is Shikimate dehydrogenase (NADP(+)) from Xylella fastidiosa (strain M12).